The chain runs to 702 residues: Phosphoglycerol transferase I (702 aa).

Transmembrane regions (helical) follow at residues 3 to 25 (WILALSLLLLLLLLVASPRLAWL), 73 to 95 (GYIAVFIGMVLLSLSPLVLLRVR), and 102 to 124 (GGGAVFGAFVVMLLVSVAVSPLY).

Belongs to the OpgB family.

The protein localises to the cell inner membrane. The catalysed reaction is a phosphatidylglycerol + a membrane-derived-oligosaccharide D-glucose = a 1,2-diacyl-sn-glycerol + a membrane-derived-oligosaccharide 6-(glycerophospho)-D-glucose.. It functions in the pathway glycan metabolism; osmoregulated periplasmic glucan (OPG) biosynthesis. Transfers a phosphoglycerol residue from phosphatidylglycerol to the membrane-bound nascent glucan backbones. The protein is Phosphoglycerol transferase I of Xanthomonas campestris pv. campestris (strain ATCC 33913 / DSM 3586 / NCPPB 528 / LMG 568 / P 25).